We begin with the raw amino-acid sequence, 740 residues long: Protein SIEVE ELEMENT OCCLUSION B (740 aa).

Residues 1–23 (MESLIKSQHAQQLAGHKNTTGKT) show a composition bias toward polar residues. Residues 1-27 (MESLIKSQHAQQLAGHKNTTGKTPSME) form a disordered region.

Can form homodimer. Expressed in phloem sieve elements.

Its function is as follows. Scaffold protein required to form the phloem filament matrix in sieve elements. This Arabidopsis thaliana (Mouse-ear cress) protein is Protein SIEVE ELEMENT OCCLUSION B.